A 258-amino-acid polypeptide reads, in one-letter code: Acyl-[acyl-carrier-protein]--UDP-N-acetylglucosamine O-acyltransferase (258 aa).

The protein belongs to the transferase hexapeptide repeat family. LpxA subfamily. As to quaternary structure, homotrimer.

It is found in the cytoplasm. The catalysed reaction is a (3R)-hydroxyacyl-[ACP] + UDP-N-acetyl-alpha-D-glucosamine = a UDP-3-O-[(3R)-3-hydroxyacyl]-N-acetyl-alpha-D-glucosamine + holo-[ACP]. The protein operates within glycolipid biosynthesis; lipid IV(A) biosynthesis; lipid IV(A) from (3R)-3-hydroxytetradecanoyl-[acyl-carrier-protein] and UDP-N-acetyl-alpha-D-glucosamine: step 1/6. In terms of biological role, involved in the biosynthesis of lipid A, a phosphorylated glycolipid that anchors the lipopolysaccharide to the outer membrane of the cell. This Pseudomonas syringae pv. tomato (strain ATCC BAA-871 / DC3000) protein is Acyl-[acyl-carrier-protein]--UDP-N-acetylglucosamine O-acyltransferase.